The sequence spans 267 residues: Small ribosomal subunit protein uS2 (267 aa).

The tract at residues 222 to 267 (GKALRDQDSEEEIQNKEQDEVSQEEKDDILDEAMNEEDFEIPEDKE) is disordered. Basic and acidic residues predominate over residues 223-240 (KALRDQDSEEEIQNKEQD). The span at 241–267 (EVSQEEKDDILDEAMNEEDFEIPEDKE) shows a compositional bias: acidic residues.

Belongs to the universal ribosomal protein uS2 family.

The polypeptide is Small ribosomal subunit protein uS2 (Campylobacter hominis (strain ATCC BAA-381 / DSM 21671 / CCUG 45161 / LMG 19568 / NCTC 13146 / CH001A)).